The chain runs to 70 residues: Small ribosomal subunit protein bS21 (70 aa).

The segment covering 48 to 61 (KLAAAVKRQSKRLR) has biased composition (basic residues). The segment at 48–70 (KLAAAVKRQSKRLRSQQLPPKMY) is disordered.

This sequence belongs to the bacterial ribosomal protein bS21 family.

This chain is Small ribosomal subunit protein bS21, found in Thiobacillus denitrificans (strain ATCC 25259 / T1).